Consider the following 798-residue polypeptide: Gelsolin (798 aa).

An N-terminal signal peptide occupies residues 1-28 (MDASGAATMAVLSSLLVFLALSSSLCSA). The actin-severing stretch occupies residues 57–181 (RVMHPSFANA…YEQGGVGTGF (125 aa)). The Gelsolin-like 1 repeat unit spans residues 78–131 (ENFEPVIYPKTNYGKFYTGDSFIVLNTIENKKDKKLSWDVHFWLGLETSTDEAG). A Phosphotyrosine; by SRC modification is found at tyrosine 90. Residues 128 to 131 (DEAG) are actin-actin interfilament contact point. Residues 167-174 (KNGIRYEQ) and 193-201 (RLFQVKGKR) contribute to the a 1,2-diacyl-sn-glycero-3-phospho-(1D-myo-inositol-4,5-bisphosphate) site. 4 Gelsolin-like repeats span residues 203–243 (VRVR…VEKL), 322–365 (LKVD…KEKT), 474–524 (IVVS…AARK), and 583–625 (VHAS…FEKQ). The actin-binding, Ca-sensitive stretch occupies residues 451–792 (MPDHGQNVIE…SYEDMKQLVI (342 aa)). Residue aspartate 599 coordinates Ca(2+). Tyrosine 612 carries the phosphotyrosine; by SRC modification. Glutamate 623 lines the Ca(2+) pocket. The residue at position 662 (tyrosine 662) is a Phosphotyrosine; by SRC. The Gelsolin-like 6 repeat unit spans residues 689–730 (LKVEEVAQYEQEDLDSDDIMLLDAGDEIYLWVGYGVSEEENG). Aspartate 705, aspartate 706, and glutamate 728 together coordinate Ca(2+).

It belongs to the villin/gelsolin family. Binds to actin and to fibronectin. Isoform 1 and isoform 2 are ubiquitously expressed in early embryo. Isoform 1 is expressed in the fat body, and is abundant in hemolymph. Isoform 2 is expressed in parts of the gut.

The protein resides in the cytoplasm. The protein localises to the cytoskeleton. Its subcellular location is the secreted. Its function is as follows. Calcium-regulated, actin-modulating protein that binds to the plus (or barbed) ends of actin monomers or filaments, preventing monomer exchange (end-blocking or capping). It can promote the assembly of monomers into filaments (nucleation) as well as sever filaments already formed. The protein is Gelsolin (Gel) of Drosophila melanogaster (Fruit fly).